A 68-amino-acid polypeptide reads, in one-letter code: U-poneritoxin(01)-Om4a (68 aa).

The N-terminal stretch at 1-25 (MKPSSLTLAFLVVFMMAIMYNSVQA) is a signal peptide. Residues 26 to 39 (EALADADAEAFAEA) constitute a propeptide that is removed on maturation.

Belongs to the formicidae venom precursor-01 superfamily. As to quaternary structure, homo- or heterodimer with PLP7 (AC A0A348G6I9); disulfide-linked. Truncated sequences of this peptide have also been found in the venom. It is possible they have been cleaved in the venom. Expressed by the venom gland.

The protein resides in the secreted. In terms of biological role, this homodimer composed of two cationic amphipathic alpha-helical peptides has antimicrobial activities against E.coli (MIC=3.1 uM), S.aureus (MIC=3.1 uM), and S.cerevisiae (MIC=3.1 uM). It also shows histamine-releasing activity (66.4% at 10 uM) and a weak hemolytic activity (10.5% at 50 uM). The protein is U-poneritoxin(01)-Om4a of Odontomachus monticola (Trap-jaw ant).